The primary structure comprises 419 residues: D(4) dopamine receptor (419 aa).

Over methionine 1–glycine 29 the chain is Extracellular. An N-linked (GlcNAc...) asparagine glycan is attached at asparagine 3. A helical membrane pass occupies residues leucine 30–alanine 50. The Cytoplasmic segment spans residues glycine 51–serine 71. The chain crosses the membrane as a helical span at residues phenylalanine 72–valine 92. Residue aspartate 80 participates in Na(+) binding. Residues tyrosine 93 to alanine 110 lie on the Extracellular side of the membrane. An intrachain disulfide couples cysteine 108 to cysteine 185. A helical transmembrane segment spans residues leucine 111–valine 131. Aspartate 115 is a binding site for (2R,3R)-nemonapride. Na(+) is bound at residue serine 122. The Cytoplasmic segment spans residues aspartate 132–glutamine 152. The helical transmembrane segment at leucine 153–glycine 173 threads the bilayer. At leucine 174 to tyrosine 192 the chain is on the extracellular side. Residues valine 193–tryptophan 213 form a helical membrane-spanning segment. Serine 196 provides a ligand contact to (2R,3R)-nemonapride. Topologically, residues alanine 214–arginine 346 are cytoplasmic. A disordered region spans residues leucine 230–proline 264. A compositionally biased stretch (pro residues) spans proline 238–proline 254. The 1; approximate repeat unit spans residues proline 249 to proline 264. A 4 X 16 AA approximate tandem repeats of [PA]-A-P-G-L-P-[PQR]-[DG]-P-C-G-P-D-C-A-P region spans residues proline 249–proline 312. 2 tandem repeats follow at residues proline 265–proline 280 and alanine 281–proline 296. Residues proline 297 to proline 312 form a 4; approximate repeat. Residues arginine 317–lysine 336 are disordered. Residues valine 347–isoleucine 367 traverse the membrane as a helical segment. Topologically, residues threonine 368–valine 382 are extracellular. Cysteine 372 and cysteine 375 are oxidised to a cystine. The chain crosses the membrane as a helical span at residues serine 383–phenylalanine 403. Residues asparagine 404–cysteine 419 are Cytoplasmic-facing. The S-palmitoyl cysteine moiety is linked to residue cysteine 419.

It belongs to the G-protein coupled receptor 1 family. Forms homo- and heterooligomers with DRD2. D4.7 allele exhibits higher affinity for homodimers compared to DRD2 heterodimers, while alleles D42. and 4.4 have similar affinities for both. The interaction with DRD2 may modulate agonist-induced downstream signaling. Interacts with CLIC6. Interacts with GPRASP1. May interact with ADORA2A. Interacts with KLHL12. Post-translationally, polyubiquitinated by the BCR(KLHL12) E3 ubiquitin ligase complex: polyubiquitination does not lead to degradation of DRD4 protein. Palmitoylated. Palmitoylation of the C-terminal Cys is important for normal expression at the cell membrane. As to expression, highly expressed in retina. Detected at much lower levels in brain, in amygdala, thalamus, hypothalamus, cerebellum and pituitary.

Its subcellular location is the cell membrane. Its activity is regulated as follows. Signaling in response to agonists such as dopamine, epinephrine and norepinephrine is modulated by Na(+); lower Na(+) levels result in higher receptor activity (in vitro). In terms of biological role, dopamine receptor responsible for neuronal signaling in the mesolimbic system of the brain, an area of the brain that regulates emotion and complex behavior. Activated by dopamine, but also by epinephrine and norepinephrine, and by numerous synthetic agonists and drugs. Agonist binding triggers signaling via G proteins that inhibit adenylyl cyclase. Modulates the circadian rhythm of contrast sensitivity by regulating the rhythmic expression of NPAS2 in the retinal ganglion cells. The protein is D(4) dopamine receptor (DRD4) of Homo sapiens (Human).